We begin with the raw amino-acid sequence, 63 residues long: Large ribosomal subunit protein uL29 (63 aa).

This sequence belongs to the universal ribosomal protein uL29 family.

In Bordetella avium (strain 197N), this protein is Large ribosomal subunit protein uL29.